The chain runs to 122 residues: Acidic phospholipase A2 BpirPLA2-I (122 aa).

7 disulfides stabilise this stretch: C26/C115, C28/C44, C43/C95, C49/C122, C50/C88, C57/C81, and C75/C86. Ca(2+) is bound by residues Y27, G29, and G31. H47 is a catalytic residue. Residue D48 coordinates Ca(2+). D89 is an active-site residue. The Antiplatelet activity signature appears at I105–E117.

It belongs to the phospholipase A2 family. Group II subfamily. D49 sub-subfamily. Ca(2+) is required as a cofactor. In terms of tissue distribution, expressed by the venom gland.

It is found in the secreted. The catalysed reaction is a 1,2-diacyl-sn-glycero-3-phosphocholine + H2O = a 1-acyl-sn-glycero-3-phosphocholine + a fatty acid + H(+). Its activity is regulated as follows. Inhibited by EDTA and p-bromophenacyl bromide (BPB). Its function is as follows. Snake venom phospholipase A2 (PLA2) that inhibits collagen/ADP-induced platelet aggregation, and induces hypotension in rats (activity abolished in the presence of p-bromophenacyl bromide). PLA2 catalyzes the calcium-dependent hydrolysis of the 2-acyl groups in 3-sn-phosphoglycerides. This is Acidic phospholipase A2 BpirPLA2-I from Bothrops pirajai (Piraja's lancehead).